The primary structure comprises 121 residues: Small ribosomal subunit protein uS11 (121 aa).

The protein belongs to the universal ribosomal protein uS11 family. As to quaternary structure, part of the 30S ribosomal subunit. Interacts with proteins S7 and S18. Binds to IF-3.

Its function is as follows. Located on the platform of the 30S subunit, it bridges several disparate RNA helices of the 16S rRNA. Forms part of the Shine-Dalgarno cleft in the 70S ribosome. This Mycoplasmoides gallisepticum (strain R(low / passage 15 / clone 2)) (Mycoplasma gallisepticum) protein is Small ribosomal subunit protein uS11.